The chain runs to 197 residues: Pinin homolog 1 (197 aa).

Residues 30–73 (LDGKVNNEDSHMEIDQPEGSMEEDDHRQVKEKNTSENSVEQKRG) are disordered. Basic and acidic residues-rich tracts occupy residues 34–43 (VNNEDSHMEI) and 53–71 (DDHR…VEQK).

The protein belongs to the pinin family.

It is found in the nucleus. The protein localises to the cytoplasm. Functionally, transcriptional activator that may participate in the regulation of mRNA splicing. The polypeptide is Pinin homolog 1 (pnn1) (Schizosaccharomyces pombe (strain 972 / ATCC 24843) (Fission yeast)).